The chain runs to 152 residues: Nucleoside diphosphate kinase B (152 aa).

Positions 1-66 are interaction with AKAP13; that stretch reads MANLERTFIA…DRPFFPGLVK (66 aa). ATP contacts are provided by K12, F60, R88, T94, R105, and N115. H118 functions as the Pros-phosphohistidine intermediate in the catalytic mechanism.

Belongs to the NDK family. In terms of assembly, hexamer of two different chains: An and B (A6, A5B, A4B2, A3B3, A2B4, AB5, B6). Interacts with CAPN8. Interacts with AKAP13. Interacts with ITGB1BP1 (via C-terminal domain region). Interacts with BCL2L10. Mg(2+) is required as a cofactor. In terms of tissue distribution, ubiquitously expressed.

It localises to the cytoplasm. The protein resides in the cell projection. The protein localises to the lamellipodium. It is found in the ruffle. Its subcellular location is the perinuclear region. It localises to the nucleus. It catalyses the reaction a 2'-deoxyribonucleoside 5'-diphosphate + ATP = a 2'-deoxyribonucleoside 5'-triphosphate + ADP. It carries out the reaction a ribonucleoside 5'-diphosphate + ATP = a ribonucleoside 5'-triphosphate + ADP. The enzyme catalyses ATP + protein L-histidine = ADP + protein N-phospho-L-histidine.. In terms of biological role, major role in the synthesis of nucleoside triphosphates other than ATP. The ATP gamma phosphate is transferred to the NDP beta phosphate via a ping-pong mechanism, using a phosphorylated active-site intermediate. Negatively regulates Rho activity by interacting with AKAP13/LBC. Acts as a transcriptional activator of the MYC gene; binds DNA non-specifically. Binds to both single-stranded guanine- and cytosine-rich strands within the nuclease hypersensitive element (NHE) III(1) region of the MYC gene promoter. Does not bind to duplex NHE III(1). Has G-quadruplex (G4) DNA-binding activity, which is independent of its nucleotide-binding and kinase activity. Binds both folded and unfolded G4 with similar low nanomolar affinities. Stabilizes folded G4s regardless of whether they are prefolded or not. Exhibits histidine protein kinase activity. This chain is Nucleoside diphosphate kinase B (NME2), found in Homo sapiens (Human).